The sequence spans 1705 residues: Alpha-protein kinase 3 (1705 aa).

Residues methionine 1 to glycine 10 show a composition bias toward low complexity. The disordered stretch occupies residues methionine 1–serine 33. Residues tryptophan 11–glycine 21 are compositionally biased toward gly residues. One can recognise an Ig-like 1 domain in the interval proline 77–glutamate 168. Basic and acidic residues predominate over residues aspartate 211–phenylalanine 221. 5 disordered regions span residues aspartate 211 to glycine 244, leucine 308 to alanine 749, glycine 792 to glycine 845, glycine 1082 to glycine 1145, and arginine 1173 to valine 1226. Serine 228 bears the Phosphoserine mark. Residues leucine 308–serine 342 are compositionally biased toward basic and acidic residues. The span at proline 370–glycine 382 shows a compositional bias: low complexity. Residues aspartate 495–glutamine 504 are compositionally biased toward polar residues. Over residues threonine 557–serine 579 the composition is skewed to low complexity. The span at threonine 598 to asparagine 609 shows a compositional bias: polar residues. Residues glutamate 647–alanine 657 show a composition bias toward basic and acidic residues. Over residues arginine 666–alanine 676 the composition is skewed to polar residues. The segment covering lysine 679–glycine 700 has biased composition (basic and acidic residues). The segment covering lysine 708–alanine 729 has biased composition (polar residues). A compositionally biased stretch (pro residues) spans serine 736–alanine 745. Residues alanine 829–proline 844 show a composition bias toward basic and acidic residues. Low complexity predominate over residues glycine 1120–glutamate 1131. Phosphoserine is present on serine 1222. One can recognise an Ig-like 2 domain in the interval proline 1274–serine 1362. A disulfide bond links cysteine 1296 and cysteine 1346. An Alpha-type protein kinase domain is found at lysine 1390–leucine 1625. A disordered region spans residues proline 1628–arginine 1705. Over residues proline 1664–glutamate 1696 the composition is skewed to polar residues.

Belongs to the protein kinase superfamily. Alpha-type protein kinase family. ALPK subfamily.

It is found in the nucleus. It catalyses the reaction L-seryl-[protein] + ATP = O-phospho-L-seryl-[protein] + ADP + H(+). It carries out the reaction L-threonyl-[protein] + ATP = O-phospho-L-threonyl-[protein] + ADP + H(+). Involved in cardiomyocyte differentiation. In Homo sapiens (Human), this protein is Alpha-protein kinase 3.